Reading from the N-terminus, the 884-residue chain is Blastomere cadherin (884 aa).

An N-terminal signal peptide occupies residues 1 to 26; it reads MGGTDKFRYPSVWLCGLLCLLQVVPS. Positions 27 to 157 are excised as a propeptide; sequence INVDVSGCQP…KHTGLKRKKR (131 aa). Cadherin domains are found at residues 158–265, 266–378, 379–489, 490–595, and 596–706; these read DWVI…RPKF, TQPV…APIF, DPKT…APVF, VPVV…DNGP, and VPSP…GFDL. Residues 158 to 706 are Extracellular-facing; it reads DWVIPPIKVS…QEKLVAGFDL (549 aa). N-linked (GlcNAc...) asparagine glycans are attached at residues asparagine 427, asparagine 560, and asparagine 683. Residues 707 to 730 traverse the membrane as a helical segment; that stretch reads PIILVILGSILALLILSLLLLLFL. The Cytoplasmic portion of the chain corresponds to 731–884; sequence KRKKVVKEPL…YGGDDDDDEE (154 aa).

As to expression, expressed in pituitary gland, lung and kidney.

It localises to the cell membrane. Its function is as follows. Cadherins are calcium-dependent cell adhesion proteins. They preferentially interact with themselves in a homophilic manner in connecting cells; cadherins may thus contribute to the sorting of heterogeneous cell types. This chain is Blastomere cadherin, found in Xenopus laevis (African clawed frog).